Reading from the N-terminus, the 200-residue chain is Histone chaperone asf1b (200 aa).

This sequence belongs to the ASF1 family. Interacts with histone H3 and histone H4.

The protein resides in the nucleus. Its function is as follows. Histone chaperone that facilitates histone deposition and histone exchange and removal during nucleosome assembly and disassembly. This is Histone chaperone asf1b (asf1b) from Xenopus tropicalis (Western clawed frog).